The following is a 148-amino-acid chain: MDTNNKDDSIIRFSVSLQQNLLDELDNRIIKNGYSSRSELVRDLIREKLVEDNWIEDSPDDKSKVAVLVVIYDHHQRELNQRMIDIQHASETHVLCTTHIHMDSHNCLETIILKGSSAEVQRLQLEIGGLRGVKFAKLTKASSFESNE.

4 residues coordinate Ni(2+): H88, H99, H101, and C107.

The protein belongs to the transcriptional regulatory CopG/NikR family. Ni(2+) is required as a cofactor.

Functionally, transcriptional regulator. The sequence is that of Putative nickel-responsive regulator from Helicobacter acinonychis (strain Sheeba).